Consider the following 886-residue polypeptide: Chitin synthase 3 (886 aa).

2 disordered regions span residues 1–70 (MQQG…YQTD) and 86–138 (PYEP…AGGG). The span at 7-17 (LDDRPYGRPEQ) shows a compositional bias: basic and acidic residues. A compositionally biased stretch (polar residues) spans 37–56 (PSDQLQLNAAQSVDNLSRNS). N-linked (GlcNAc...) asparagine glycosylation occurs at Asn51. Basic and acidic residues predominate over residues 106–122 (YDHDDLRPMLPHQDSHA). N-linked (GlcNAc...) asparagine glycosylation is present at Asn196. Transmembrane regions (helical) follow at residues 428 to 448 (SAFG…YVAL), 526 to 546 (RWLN…YQFF), 556 to 576 (VMLF…WFAV), 602 to 622 (ILGV…FVLS), 637 to 657 (MVYF…FIAV), 683 to 703 (TLIV…FLMF), and 712 to 732 (FVQY…YAFC). A disordered region spans residues 745–768 (DQAEKLPSVSTKDGSGKTDLPDES). 2 helical membrane passes run 813-833 (VLAW…AAGL) and 858-878 (VVLW…MWFL).

It belongs to the chitin synthase family. Class I subfamily.

The protein resides in the cell membrane. The enzyme catalyses [(1-&gt;4)-N-acetyl-beta-D-glucosaminyl](n) + UDP-N-acetyl-alpha-D-glucosamine = [(1-&gt;4)-N-acetyl-beta-D-glucosaminyl](n+1) + UDP + H(+). In terms of biological role, polymerizes chitin, a structural polymer of the cell wall and septum, by transferring the sugar moiety of UDP-GlcNAc to the non-reducing end of the growing chitin polymer. Involved in tolerance to hyperosmotic conditions. CHS3 is the only V.dahliae chitin synthase that is not involved in virulence. The chain is Chitin synthase 3 from Verticillium dahliae (strain VdLs.17 / ATCC MYA-4575 / FGSC 10137) (Verticillium wilt).